Here is a 728-residue protein sequence, read N- to C-terminus: Catalase-peroxidase 1 (728 aa).

Positions 91 to 218 (WHSAGTYRTA…LAAVQMGLIY (128 aa)) form a cross-link, tryptophyl-tyrosyl-methioninium (Trp-Tyr) (with M-244). The active-site Proton acceptor is histidine 92. Positions 218–244 (YVNPEGPDGNPDPVAAARDIRDTFARM) form a cross-link, tryptophyl-tyrosyl-methioninium (Tyr-Met) (with W-91). Residue histidine 259 participates in heme b binding.

It belongs to the peroxidase family. Peroxidase/catalase subfamily. Homodimer or homotetramer. The cofactor is heme b. In terms of processing, formation of the three residue Trp-Tyr-Met cross-link is important for the catalase, but not the peroxidase activity of the enzyme.

It catalyses the reaction H2O2 + AH2 = A + 2 H2O. The enzyme catalyses 2 H2O2 = O2 + 2 H2O. In terms of biological role, bifunctional enzyme with both catalase and broad-spectrum peroxidase activity. The chain is Catalase-peroxidase 1 from Burkholderia ambifaria (strain MC40-6).